Here is a 299-residue protein sequence, read N- to C-terminus: tRNA-cytidine(32) 2-sulfurtransferase (299 aa).

A PP-loop motif motif is present at residues 56-61 (SGGKDS). 3 residues coordinate [4Fe-4S] cluster: Cys131, Cys134, and Cys222.

This sequence belongs to the TtcA family. Homodimer. It depends on Mg(2+) as a cofactor. [4Fe-4S] cluster serves as cofactor.

It localises to the cytoplasm. The catalysed reaction is cytidine(32) in tRNA + S-sulfanyl-L-cysteinyl-[cysteine desulfurase] + AH2 + ATP = 2-thiocytidine(32) in tRNA + L-cysteinyl-[cysteine desulfurase] + A + AMP + diphosphate + H(+). It functions in the pathway tRNA modification. In terms of biological role, catalyzes the ATP-dependent 2-thiolation of cytidine in position 32 of tRNA, to form 2-thiocytidine (s(2)C32). The sulfur atoms are provided by the cysteine/cysteine desulfurase (IscS) system. The sequence is that of tRNA-cytidine(32) 2-sulfurtransferase from Xylella fastidiosa (strain M12).